A 380-amino-acid chain; its full sequence is Chaperone protein DnaJ (380 aa).

Positions 5–70 (DYYEVLGVER…SKRAAYDQYG (66 aa)) constitute a J domain. The CR-type zinc finger occupies 139–217 (GTTVNIRVPT…CHGEGRVEES (79 aa)). Positions 152, 155, 169, 172, 191, 194, 205, and 208 each coordinate Zn(2+). CXXCXGXG motif repeat units lie at residues 152–159 (CKPCDGSG), 169–176 (CPTCGGIG), 191–198 (CPRCHGHG), and 205–212 (CDSCHGEG).

It belongs to the DnaJ family. As to quaternary structure, homodimer. Requires Zn(2+) as cofactor.

Its subcellular location is the cytoplasm. In terms of biological role, participates actively in the response to hyperosmotic and heat shock by preventing the aggregation of stress-denatured proteins and by disaggregating proteins, also in an autonomous, DnaK-independent fashion. Unfolded proteins bind initially to DnaJ; upon interaction with the DnaJ-bound protein, DnaK hydrolyzes its bound ATP, resulting in the formation of a stable complex. GrpE releases ADP from DnaK; ATP binding to DnaK triggers the release of the substrate protein, thus completing the reaction cycle. Several rounds of ATP-dependent interactions between DnaJ, DnaK and GrpE are required for fully efficient folding. Also involved, together with DnaK and GrpE, in the DNA replication of plasmids through activation of initiation proteins. This Pseudomonas syringae pv. tomato (strain ATCC BAA-871 / DC3000) protein is Chaperone protein DnaJ.